A 328-amino-acid chain; its full sequence is Methionyl-tRNA formyltransferase (328 aa).

110-113 lines the (6S)-5,6,7,8-tetrahydrofolate pocket; sequence SLLP.

It belongs to the Fmt family.

It carries out the reaction L-methionyl-tRNA(fMet) + (6R)-10-formyltetrahydrofolate = N-formyl-L-methionyl-tRNA(fMet) + (6S)-5,6,7,8-tetrahydrofolate + H(+). In terms of biological role, attaches a formyl group to the free amino group of methionyl-tRNA(fMet). The formyl group appears to play a dual role in the initiator identity of N-formylmethionyl-tRNA by promoting its recognition by IF2 and preventing the misappropriation of this tRNA by the elongation apparatus. This chain is Methionyl-tRNA formyltransferase, found in Prochlorococcus marinus (strain MIT 9215).